The sequence spans 315 residues: Ribosomal protein L11 methyltransferase (315 aa).

Threonine 164, glycine 185, aspartate 207, and asparagine 249 together coordinate S-adenosyl-L-methionine.

Belongs to the methyltransferase superfamily. PrmA family.

It is found in the cytoplasm. It catalyses the reaction L-lysyl-[protein] + 3 S-adenosyl-L-methionine = N(6),N(6),N(6)-trimethyl-L-lysyl-[protein] + 3 S-adenosyl-L-homocysteine + 3 H(+). Its function is as follows. Methylates ribosomal protein L11. In Lactobacillus johnsonii (strain CNCM I-12250 / La1 / NCC 533), this protein is Ribosomal protein L11 methyltransferase.